The chain runs to 230 residues: Probable caffeoyl-CoA O-methyltransferase 1 (230 aa).

S-adenosyl-L-methionine-binding positions include threonine 52, aspartate 74, 76 to 77 (GV), serine 82, aspartate 100, alanine 129, aspartate 151, aspartate 153, and tyrosine 160. Aspartate 151 contacts a divalent metal cation. Residues aspartate 177 and asparagine 178 each contribute to the a divalent metal cation site.

This sequence belongs to the class I-like SAM-binding methyltransferase superfamily. Cation-dependent O-methyltransferase family. CCoAMT subfamily.

It catalyses the reaction (E)-caffeoyl-CoA + S-adenosyl-L-methionine = (E)-feruloyl-CoA + S-adenosyl-L-homocysteine + H(+). This is Probable caffeoyl-CoA O-methyltransferase 1 (omt5) from Dictyostelium discoideum (Social amoeba).